Reading from the N-terminus, the 204-residue chain is UPF0134 protein MPN_655 (204 aa).

The disordered stretch occupies residues 46 to 132; that stretch reads EVENKPKIPI…FNEFKDSNNQ (87 aa). A compositionally biased stretch (pro residues) spans 64–80; the sequence is SPKPLKPPKPPKPPKGP. The segment covering 117–132 has biased composition (basic and acidic residues); it reads YVTRKEFNEFKDSNNQ.

The protein belongs to the UPF0134 family.

In Mycoplasma pneumoniae (strain ATCC 29342 / M129 / Subtype 1) (Mycoplasmoides pneumoniae), this protein is UPF0134 protein MPN_655.